The sequence spans 640 residues: Threonine--tRNA ligase (640 aa).

A TGS domain is found at 1 to 61; the sequence is MPIITLPDGS…DHDATLQIIT (61 aa). The segment at 242–533 is catalytic; sequence DHRKLGKRLD…LIEHYEGAFP (292 aa). Residues C333, H384, and H510 each coordinate Zn(2+).

This sequence belongs to the class-II aminoacyl-tRNA synthetase family. Homodimer. Requires Zn(2+) as cofactor.

Its subcellular location is the cytoplasm. It carries out the reaction tRNA(Thr) + L-threonine + ATP = L-threonyl-tRNA(Thr) + AMP + diphosphate + H(+). Catalyzes the attachment of threonine to tRNA(Thr) in a two-step reaction: L-threonine is first activated by ATP to form Thr-AMP and then transferred to the acceptor end of tRNA(Thr). Also edits incorrectly charged L-seryl-tRNA(Thr). This Azotobacter vinelandii (strain DJ / ATCC BAA-1303) protein is Threonine--tRNA ligase.